A 432-amino-acid chain; its full sequence is Glutamyl-tRNA reductase (432 aa).

Substrate-binding positions include 49–52 (TCNR), S101, 106–108 (ESQ), and Q112. C50 serves as the catalytic Nucleophile. Residue 181–186 (GTGETI) participates in NADP(+) binding.

This sequence belongs to the glutamyl-tRNA reductase family. As to quaternary structure, homodimer.

It carries out the reaction (S)-4-amino-5-oxopentanoate + tRNA(Glu) + NADP(+) = L-glutamyl-tRNA(Glu) + NADPH + H(+). It participates in porphyrin-containing compound metabolism; protoporphyrin-IX biosynthesis; 5-aminolevulinate from L-glutamyl-tRNA(Glu): step 1/2. In terms of biological role, catalyzes the NADPH-dependent reduction of glutamyl-tRNA(Glu) to glutamate 1-semialdehyde (GSA). This is Glutamyl-tRNA reductase from Xylella fastidiosa (strain M12).